We begin with the raw amino-acid sequence, 754 residues long: tRNA(Met) cytidine acetyltransferase TmcA (754 aa).

Positions 181-202 (GISFDAAPPRVPTEKDRRSPRR) are disordered. The segment covering 192–202 (PTEKDRRSPRR) has biased composition (basic and acidic residues). ATP is bound by residues Gln212, 236–245 (GRGKSSAAGL), and Arg383. The 186-residue stretch at 418–603 (VSYRALSPDD…YSALMTRPLS (186 aa)) folds into the N-acetyltransferase domain. Acetyl-CoA is bound by residues 529–531 (IAT), 536–542 (RSSGLGS), and Glu568.

This sequence belongs to the RNA cytidine acetyltransferase family. TmcA subfamily.

The protein localises to the cytoplasm. It catalyses the reaction cytidine(34) in elongator tRNA(Met) + acetyl-CoA + ATP + H2O = N(4)-acetylcytidine(34) in elongator tRNA(Met) + ADP + phosphate + CoA + H(+). In terms of biological role, catalyzes the formation of N(4)-acetylcytidine (ac(4)C) at the wobble position of tRNA(Met), by using acetyl-CoA as an acetyl donor and ATP (or GTP). The sequence is that of tRNA(Met) cytidine acetyltransferase TmcA from Haloferax volcanii (strain ATCC 29605 / DSM 3757 / JCM 8879 / NBRC 14742 / NCIMB 2012 / VKM B-1768 / DS2) (Halobacterium volcanii).